The sequence spans 371 residues: 4-hydroxy-3-methylbut-2-en-1-yl diphosphate synthase (flavodoxin) (371 aa).

Positions 272, 275, 307, and 314 each coordinate [4Fe-4S] cluster.

It belongs to the IspG family. It depends on [4Fe-4S] cluster as a cofactor.

It catalyses the reaction (2E)-4-hydroxy-3-methylbut-2-enyl diphosphate + oxidized [flavodoxin] + H2O + 2 H(+) = 2-C-methyl-D-erythritol 2,4-cyclic diphosphate + reduced [flavodoxin]. It participates in isoprenoid biosynthesis; isopentenyl diphosphate biosynthesis via DXP pathway; isopentenyl diphosphate from 1-deoxy-D-xylulose 5-phosphate: step 5/6. In terms of biological role, converts 2C-methyl-D-erythritol 2,4-cyclodiphosphate (ME-2,4cPP) into 1-hydroxy-2-methyl-2-(E)-butenyl 4-diphosphate. The sequence is that of 4-hydroxy-3-methylbut-2-en-1-yl diphosphate synthase (flavodoxin) from Pseudomonas paraeruginosa (strain DSM 24068 / PA7) (Pseudomonas aeruginosa (strain PA7)).